The primary structure comprises 253 residues: MKSMIVVACLALACGAHASGWAGPPANIALSQDGRNILDTPEVAQARAAHISALQQASKNNPNPNDDGSYDPRWDNEEYWQQAEGKWNGAPAPAWNAAPAPSWNGAHAAAPSWNAAPAHSWNAAGSAPAPVAETPEVAQARAAHLAALSAAKSAAPAQQQWNAPAHQDWNAPAHQDWNAPAHQDWNAPAHQSWNGAPSWQSGAPAHQPANIRLANDGSGILDTPEVAAARAAHLAAHAQAAHSAPAHAPQQHW.

Positions 1–18 (MKSMIVVACLALACGAHA) are cleaved as a signal peptide. Over residues 54 to 66 (LQQASKNNPNPND) the composition is skewed to polar residues. Residues 54–74 (LQQASKNNPNPNDDGSYDPRW) are disordered. Repeat copies occupy residues 97-100 (AAPA), 115-118 (AAPA), and 154-157 (AAPA). Residues 155–167 (APAQQQWNAPAHQ) show a composition bias toward low complexity. Disordered regions lie at residues 155–178 (APAQQQWNAPAHQDWNAPAHQDWN) and 187–206 (APAHQSWNGAPSWQSGAPAH). Polar residues predominate over residues 189–201 (AHQSWNGAPSWQS).

Component of the cuticle of the pupae of silk moth. This is Pupal cuticle protein (PCP) from Bombyx mori (Silk moth).